A 313-amino-acid polypeptide reads, in one-letter code: Aspartate carbamoyltransferase catalytic subunit (313 aa).

Positions 58 and 59 each coordinate carbamoyl phosphate. Lys86 lines the L-aspartate pocket. Carbamoyl phosphate-binding residues include Arg108, His136, and Gln139. Residues Arg169 and Arg223 each contribute to the L-aspartate site. Residues Gly265 and Pro266 each coordinate carbamoyl phosphate.

Belongs to the aspartate/ornithine carbamoyltransferase superfamily. ATCase family. In terms of assembly, heterododecamer (2C3:3R2) of six catalytic PyrB chains organized as two trimers (C3), and six regulatory PyrI chains organized as three dimers (R2).

The enzyme catalyses carbamoyl phosphate + L-aspartate = N-carbamoyl-L-aspartate + phosphate + H(+). The protein operates within pyrimidine metabolism; UMP biosynthesis via de novo pathway; (S)-dihydroorotate from bicarbonate: step 2/3. Its function is as follows. Catalyzes the condensation of carbamoyl phosphate and aspartate to form carbamoyl aspartate and inorganic phosphate, the committed step in the de novo pyrimidine nucleotide biosynthesis pathway. The chain is Aspartate carbamoyltransferase catalytic subunit from Anaeromyxobacter dehalogenans (strain 2CP-C).